Here is a 78-residue protein sequence, read N- to C-terminus: Small ribosomal subunit protein bS20 (78 aa).

This sequence belongs to the bacterial ribosomal protein bS20 family.

Binds directly to 16S ribosomal RNA. This Streptococcus pneumoniae serotype 2 (strain D39 / NCTC 7466) protein is Small ribosomal subunit protein bS20.